The following is a 317-amino-acid chain: Transcription factor EC (317 aa).

The disordered stretch occupies residues 1–44 (MTLDHQILNQSFKRSHPPTPSSELLVQHGHPSPESDTGLTGNPL). The tract at residues 1 to 90 (MTLDHQILNQ…GLTSASCPSS (90 aa)) is necessary for transcriptional transactivation. Positions 34–43 (ESDTGLTGNP) are enriched in polar residues. In terms of domain architecture, bHLH spans 110–163 (QKKDNHNLIERRRRYNINYRIKELGTLIPKSNDPDMRWNKGTILKASVEYIKWL). Residues 241–317 (TSPELCDQAM…SFSSEDGDEL (77 aa)) form a necessary for transcriptional transactivation region. The segment at 297–317 (PAVSKESSRRSSFSSEDGDEL) is disordered.

This sequence belongs to the MiT/TFE family. In terms of assembly, homodimer. Forms heterodimers with MITF and TFE3. Interacts with MITF.

The protein resides in the nucleus. Its function is as follows. Transcriptional regulator that acts as a repressor or an activator. Acts as a transcriptional repressor on minimal promoter containing element F (that includes an E-box sequence). Binds to element F in an E-box sequence-specific manner. Acts as a transcriptional transactivator on the proximal promoter region of the tartrate-resistant acid phosphatase (TRAP) E-box containing promoter. Collaborates with MITF in target gene activation. Acts as a transcriptional repressor on minimal promoter containing mu E3 enhancer sequence. Binds to mu E3 DNA sequence of the immunoglobulin heavy-chain gene enhancer. Binds DNA in a homo- or heterodimeric form. In Bos taurus (Bovine), this protein is Transcription factor EC (TFEC).